The primary structure comprises 664 residues: Exoribonuclease 2 (664 aa).

Residues 193 to 521 form the RNB domain; that stretch reads RIDMTHIPFV…INHRMLKALI (329 aa). The 83-residue stretch at 568-650 folds into the S1 motif domain; that stretch reads QTLFTGEIFD…ENRSLVAKPT (83 aa).

The protein belongs to the RNR ribonuclease family. RNase II subfamily.

The protein localises to the cytoplasm. It catalyses the reaction Exonucleolytic cleavage in the 3'- to 5'-direction to yield nucleoside 5'-phosphates.. In terms of biological role, involved in mRNA degradation. Hydrolyzes single-stranded polyribonucleotides processively in the 3' to 5' direction. The polypeptide is Exoribonuclease 2 (Vibrio vulnificus (strain YJ016)).